The primary structure comprises 499 residues: MEFMKQLEVWFLVGSQHLYSATTLKQVADHAHTMTSQLNEGAGLPIKIVLKPTGTTLDEISSVARDANHSEQCVGLMVWMHTFSPAKMWIPALSQLQKPLLQFHTQFNRDLPWSEIDMDFMNLNQTAHGGREFGFMGARLRLPRTVVVGHWQDEEAWSKIGNWMRIAAAIHDSRHLKIARFGDNMRNVAVTEGDKIEAQIQFGYQVNYHPVGDLVKIIDAVPAADIEALLAEYEQSYTLTEAVQAGGPLRASLYEAARQELGMKKFLTEGGFGAFTTTFEDLHGLHQLPGLACQRLMQQGFGFGAEGDWKTAALLRTIKVMGTGLAGGTSFMEDYTYHLEAGNNLVLGSHMLEVCPSIAADKPVLDAQHLGIGKKADPARLLFAAPAGKAVNASLIDMGNRFRLVVNQLEVVDLPEAMPKLPVASALWKPLPSLQTSAEAWILAGAAHHSVFTQSVDIEQLRTFADIMGIEFVVIDEHTRIPALKETLRWNEVYYKICH.

The Mn(2+) site is built by E306, E333, H350, and H449.

This sequence belongs to the arabinose isomerase family. The cofactor is Mn(2+).

The enzyme catalyses beta-L-arabinopyranose = L-ribulose. It participates in carbohydrate degradation; L-arabinose degradation via L-ribulose; D-xylulose 5-phosphate from L-arabinose (bacterial route): step 1/3. In terms of biological role, catalyzes the conversion of L-arabinose to L-ribulose. This is L-arabinose isomerase from Aeromonas salmonicida (strain A449).